We begin with the raw amino-acid sequence, 277 residues long: Bleomycin hydrolase (277 aa).

The active site involves C53.

The protein belongs to the peptidase C1 family. In terms of assembly, homohexamer. Interacts with NUDT12 (via ANK repeats).

Its subcellular location is the cytoplasm. The protein localises to the cytoplasmic granule. It carries out the reaction Inactivates bleomycin B2 (a cytotoxic glycometallopeptide) by hydrolysis of a carboxyamide bond of beta-aminoalanine, but also shows general aminopeptidase activity. The specificity varies somewhat with source, but amino acid arylamides of Met, Leu and Ala are preferred.. Strongly inhibited by leupeptin, puromycin, NEM, and divalent cations. In terms of biological role, the normal physiological role of BLM hydrolase is unknown, but it catalyzes the inactivation of the antitumor drug BLM (a glycopeptide) by hydrolyzing the carboxamide bond of its B-aminoalaninamide moiety thus protecting normal and malignant cells from BLM toxicity. The chain is Bleomycin hydrolase (BLMH) from Oryctolagus cuniculus (Rabbit).